A 225-amino-acid polypeptide reads, in one-letter code: uncharacterized protein (225 aa).

The interval 1 to 48 (MTQLVTRARSARGSTLGEQPRQDQLDFADHTGTAGDGNDGAAAASGPV) is disordered. Basic and acidic residues predominate over residues 20–29 (PRQDQLDFAD). An HTH merR-type domain is found at 64–136 (GYRGPSACQI…LHNIRVAVDH (73 aa)). Residues 201–225 (DGGESIAAPEDELASRRKHRDRKIG) are disordered. Residues 216 to 225 (RRKHRDRKIG) show a composition bias toward basic residues.

This is an uncharacterized protein from Mycobacterium tuberculosis (strain CDC 1551 / Oshkosh).